The primary structure comprises 611 residues: UvrABC system protein C (611 aa).

The GIY-YIG domain occupies 14–91; the sequence is TSPGCYIHKD…IKENKPKYNI (78 aa). The UVR domain maps to 196–231; the sequence is DQIIEDLRGKMAGAAQTMEFEKAAEYRDLIQSIGTL.

The protein belongs to the UvrC family. As to quaternary structure, interacts with UvrB in an incision complex.

Its subcellular location is the cytoplasm. The UvrABC repair system catalyzes the recognition and processing of DNA lesions. UvrC both incises the 5' and 3' sides of the lesion. The N-terminal half is responsible for the 3' incision and the C-terminal half is responsible for the 5' incision. The sequence is that of UvrABC system protein C from Streptococcus gordonii (strain Challis / ATCC 35105 / BCRC 15272 / CH1 / DL1 / V288).